We begin with the raw amino-acid sequence, 371 residues long: Antibiotic efflux pump periplasmic linker protein ArpA (371 aa).

Residues 1-22 (MQFKPAVTALVSAVALATLLSG) form the signal peptide. Residue Cys-23 is the site of N-palmitoyl cysteine attachment. Residue Cys-23 is the site of S-diacylglycerol cysteine attachment. Positions 115-155 (LAERYKQLIDEQAVSKQEYDDANAKRLQAEASLKSAQIDLR) form a coiled coil.

The protein belongs to the membrane fusion protein (MFP) (TC 8.A.1) family.

Its subcellular location is the cell inner membrane. Its function is as follows. The periplasmic linker protein component of an antibiotic efflux pump. Confers resistance to numerous structurally unrelated antibiotics such as carbenicillin, chloramphenicol, erythromycin, novobiocin, streptomycin and tetracycline. Is not involved in organic solvent efflux. In Pseudomonas putida (Arthrobacter siderocapsulatus), this protein is Antibiotic efflux pump periplasmic linker protein ArpA (arpA).